Consider the following 100-residue polypeptide: Urease subunit gamma (100 aa).

It belongs to the urease gamma subunit family. Heterotrimer of UreA (gamma), UreB (beta) and UreC (alpha) subunits. Three heterotrimers associate to form the active enzyme.

It localises to the cytoplasm. It carries out the reaction urea + 2 H2O + H(+) = hydrogencarbonate + 2 NH4(+). The protein operates within nitrogen metabolism; urea degradation; CO(2) and NH(3) from urea (urease route): step 1/1. This chain is Urease subunit gamma, found in Nocardia farcinica (strain IFM 10152).